A 150-amino-acid chain; its full sequence is UPF0098 protein CPn_0877/CP_0992/CPj0877/CpB0906 (150 aa).

It belongs to the UPF0098 family.

The sequence is that of UPF0098 protein CPn_0877/CP_0992/CPj0877/CpB0906 from Chlamydia pneumoniae (Chlamydophila pneumoniae).